A 1480-amino-acid polypeptide reads, in one-letter code: Tubulin-specific chaperone D (1480 aa).

2 disordered regions span residues 1–32 (MENS…SQQQ) and 453–476 (NNNN…EEIP). 2 stretches are compositionally biased toward low complexity: residues 7 to 32 (ISLN…SQQQ) and 453 to 463 (NNNNNNNNNEN). Positions 464-476 (NNEEGEEEEEEIP) are enriched in acidic residues. One copy of the HEAT 1 repeat lies at 482-520 (ILEEIMKSLKDKDTIIRWTSAKAIGRIVNLLPKDMGDQV). The interval 859–880 (KPIITPPSSKSTTNNNNNNNNN) is disordered. The stretch at 886 to 922 (EIAFNIILGYLNENLNHPNEEVQKEASKAFELLFSKY) is one HEAT 2 repeat. The segment at 1437–1480 (NPHKQSDDNNNNNNGELINNNTENNNNNNFDDNLPEDSQDLMEI) is disordered. Positions 1444–1468 (DNNNNNNGELINNNTENNNNNNFDD) are enriched in low complexity. A compositionally biased stretch (acidic residues) spans 1469–1480 (NLPEDSQDLMEI).

This sequence belongs to the TBCD family. Supercomplex made of cofactors A to E. Cofactors A and D function by capturing and stabilizing tubulin in a quasi-native conformation. Cofactor E binds to the cofactor D-tubulin complex; interaction with cofactor C then causes the release of tubulin polypeptides that are committed to the native state.

Its function is as follows. Tubulin-folding protein; involved in the first step of the tubulin folding pathway. The polypeptide is Tubulin-specific chaperone D (tbcd) (Dictyostelium discoideum (Social amoeba)).